Consider the following 94-residue polypeptide: MFKVNEYFDGTVKSIAFGTAEGPATIGVMAPGEYEFGTAQREIMHVVSGALTVRLPDSADWETFPAGSQFNVPANSKFQLKVAVDTAYLCEYRG.

This sequence belongs to the nucleoside phosphorylase PpnP family.

The catalysed reaction is a purine D-ribonucleoside + phosphate = a purine nucleobase + alpha-D-ribose 1-phosphate. The enzyme catalyses adenosine + phosphate = alpha-D-ribose 1-phosphate + adenine. It carries out the reaction cytidine + phosphate = cytosine + alpha-D-ribose 1-phosphate. It catalyses the reaction guanosine + phosphate = alpha-D-ribose 1-phosphate + guanine. The catalysed reaction is inosine + phosphate = alpha-D-ribose 1-phosphate + hypoxanthine. The enzyme catalyses thymidine + phosphate = 2-deoxy-alpha-D-ribose 1-phosphate + thymine. It carries out the reaction uridine + phosphate = alpha-D-ribose 1-phosphate + uracil. It catalyses the reaction xanthosine + phosphate = alpha-D-ribose 1-phosphate + xanthine. Functionally, catalyzes the phosphorolysis of diverse nucleosides, yielding D-ribose 1-phosphate and the respective free bases. Can use uridine, adenosine, guanosine, cytidine, thymidine, inosine and xanthosine as substrates. Also catalyzes the reverse reactions. This is Pyrimidine/purine nucleoside phosphorylase from Pseudomonas fluorescens (strain ATCC BAA-477 / NRRL B-23932 / Pf-5).